Here is a 532-residue protein sequence, read N- to C-terminus: Monolignol oxidoreductase AtBBE-like 15 (532 aa).

The N-terminal stretch at 1-27 (MAFAISKRNATLFLVTLLLISVPLSSS) is a signal peptide. Cys-36 and Cys-100 are oxidised to a cystine. N-linked (GlcNAc...) asparagine glycosylation is present at Asn-57. The region spanning 76–254 (TPSNPKPVFI…LAWKIKLVPV (179 aa)) is the FAD-binding PCMH-type domain. Positions 115-179 (HDYEGLSFVA…QTHGFPAGLC (65 aa)) form a cross-link, 6-(S-cysteinyl)-8alpha-(pros-histidyl)-FAD (His-Cys). Residues Asn-306 and Asn-431 are each glycosylated (N-linked (GlcNAc...) asparagine).

Belongs to the oxygen-dependent FAD-linked oxidoreductase family. The cofactor is FAD. In terms of processing, the FAD cofactor is bound via a bicovalent 6-S-cysteinyl, 8alpha-N1-histidyl FAD linkage. As to expression, expressed in sepals and stamen.

It is found in the secreted. The protein resides in the cell wall. It catalyses the reaction (E)-4-coumaroyl alcohol + A = (E)-4-coumaraldehyde + AH2. It carries out the reaction (E)-coniferol + A = (E)-coniferaldehyde + AH2. The catalysed reaction is (E)-sinapyl alcohol + A = (E)-sinapaldehyde + AH2. The enzyme catalyses 4-O-(beta-D-glucosyl)-(E)-coniferol + A = 4-O-(beta-D-glucosyl)-4-(E)-coniferyl aldehyde + AH2. Its function is as follows. Required for endosperm development and polar nuclei fusion. Mediates oxidation of p-hydroxylated derivatives of cinnamyl alcohol (i.e. the monolignols p-coumaryl-, coniferyl-, and sinapyl alcohol) to their corresponding aldehydes. Can also use the beta-O-glycosylated form of coniferyl alcohol (coniferin) as substrate, but is much less efficient towards cinnamyl alcohol. The electron acceptor required for these reactions is not known, but does not seem to be dioxygen. This is Monolignol oxidoreductase AtBBE-like 15 from Arabidopsis thaliana (Mouse-ear cress).